A 216-amino-acid chain; its full sequence is uncharacterized protein (216 aa).

It localises to the plastid. Its subcellular location is the chloroplast. This is an uncharacterized protein from Pyropia yezoensis (Susabi-nori).